Here is a 529-residue protein sequence, read N- to C-terminus: FAD-binding monooxygenase BOA2 (529 aa).

Residues 58–61 (VWWK), 70–71 (DI), and Tyr76 each bind FAD. NADP(+) is bound at residue 68-70 (ACD). NADP(+) contacts are provided by residues 198–204 (TGPSACQ) and 221–222 (RS).

The protein belongs to the FAD-binding monooxygenase family. Requires FAD as cofactor.

The protein operates within polyketide biosynthesis. Its function is as follows. FAD-binding monooxygenase; part of the gene cluster A that mediates the biosynthesis of botcinic acid and its botcinin derivatives, acetate-derived polyketides that contribute to virulence when combined with the sesquiterpene botrydial. Botcinic acid and its derivatives have been shown to induce chlorosis and necrosis during host plant infection, but also have antifungal activities. Two polyketide synthases, BOA6 and BOA9, are involved in the biosynthesis of botcinins. BOA6 mediates the formation of the per-methylated tetraketide core by condensation of four units of malonyl-CoA with one unit of acetyl-CoA, which would be methylated in activated methylene groups to yield a bicyclic acid intermediate that could then either be converted to botrylactone derivatives or lose the starter acetate unit through a retro-Claisen type C-C bond cleavage to yield botcinin derivatives. The second polyketide synthase, BOA9, is probably required for the biosynthesis of the tetraketide side chain of botcinins. The methyltransferase (MT) domain within BOA6 is probably responsible for the incorporation of four methyl groups. The trans-enoyl reductase BOA5 might take over the enoyl reductase function of BOA6 that misses an ER domain. The monooxygenases BOA2, BOA3 and BOA4 might be involved in further hydroxylations at C4, C5 and C8, whereas BOA7, close to BOA9, could potentially be involved in the hydroxylation at C4 in the side chain of botcinins. This chain is FAD-binding monooxygenase BOA2, found in Botryotinia fuckeliana (strain B05.10) (Noble rot fungus).